We begin with the raw amino-acid sequence, 445 residues long: Putative ankyrin repeat protein L797 (445 aa).

4 ANK repeats span residues 73–102 (FMEDCLRQSFYDGQLYIADYLVDKGADIYS), 285–314 (NHEHIANLATQNGHIEILKYLVEEKYELVG), 315–344 (NLYIIMFLACQYGHLEIIKYLVELGVDIRQ), and 346–375 (LDAFIYLLWQGSYFNILKYLLTVDSDIINI).

The sequence is that of Putative ankyrin repeat protein L797 from Acanthamoeba polyphaga (Amoeba).